Consider the following 150-residue polypeptide: MVIALKRFSFLASIATLTVLNACATISLSDKSGEFYINNIPSSAELHRINYDLTFSLGFTNRIQTKKKNEVNFVAFYGTGLLIDWKEGNQYQPFRVYLATNVHVAAGLKNEADYLPYSQPDAELGWTVDFRLGKYTNVKDFVSPNENRIT.

Residues 1–22 (MVIALKRFSFLASIATLTVLNA) form the signal peptide. Cysteine 23 carries N-palmitoyl cysteine lipidation. Residue cysteine 23 is the site of S-diacylglycerol cysteine attachment.

It belongs to the MG067/MG068/MG395 family.

The protein resides in the cell membrane. This is an uncharacterized protein from Mycoplasma pneumoniae (strain ATCC 29342 / M129 / Subtype 1) (Mycoplasmoides pneumoniae).